Reading from the N-terminus, the 277-residue chain is Undecaprenyl-diphosphatase (277 aa).

8 helical membrane passes run 1–21 (MDII…FLPV), 38–58 (SSLA…LWFF), 93–113 (LVWY…LFES), 118–138 (LFAG…TILY), 168–188 (AILP…VIGL), 191–211 (EFAA…AFVV), 222–242 (FNAL…YLAI), and 256–276 (IFAY…ITHL).

Belongs to the UppP family.

The protein localises to the cell membrane. The catalysed reaction is di-trans,octa-cis-undecaprenyl diphosphate + H2O = di-trans,octa-cis-undecaprenyl phosphate + phosphate + H(+). In terms of biological role, catalyzes the dephosphorylation of undecaprenyl diphosphate (UPP). This chain is Undecaprenyl-diphosphatase, found in Methanobrevibacter smithii (strain ATCC 35061 / DSM 861 / OCM 144 / PS).